The sequence spans 115 residues: MLDVIKAIEAEQIRTDLPAFKVGDTVKVHVKIKEGTRERIQVFEGTVIKRQNGGLRETFTVRRLAYGVGVERTFPVNAPTVSKIEIVRKGKVRRAKLFYLRDRVGKAAKVKERRY.

Belongs to the bacterial ribosomal protein bL19 family.

Functionally, this protein is located at the 30S-50S ribosomal subunit interface and may play a role in the structure and function of the aminoacyl-tRNA binding site. This is Large ribosomal subunit protein bL19 from Clostridium tetani (strain Massachusetts / E88).